The following is a 776-amino-acid chain: Transcription factor MYB3R-1 (776 aa).

Residues 1 to 41 form a disordered region; the sequence is MKREMKAPTTPLESLQGDLKGKQGRTSGPARRSTKGQWTPE. HTH myb-type domains follow at residues 30–81, 82–137, and 138–188; these read ARRS…QKVL, NPEL…NPGI, and NKNA…KKKL. 3 DNA-binding regions (H-T-H motif) span residues 58 to 81, 110 to 133, and 161 to 184; these read WKKI…QKVL, WSTI…HNHL, and WAEL…NSSV. Disordered stretches follow at residues 217-253, 364-384, and 401-435; these read SSWM…STND, FQSS…TDPE, and DNMK…AETH. 3 stretches are compositionally biased toward polar residues: residues 240–253, 364–380, and 423–432; these read CSQA…STND, FQSS…SNSD, and GKGSLCSQAA. The Nuclear localization signal motif lies at 648 to 655; it reads KKRHRDLL.

Component of a DREAM-like complex which modulates a variety of developmentally regulated genes and of the mitotic genes in proliferating and differentiated cells. In terms of tissue distribution, expressed ubiquitously at low levels. Expressed in roots, cotyledons, flowers and leaves, especially in vascular tissues.

It is found in the nucleus. Functionally, transcription factor that binds 5'-AACGG-3' motifs in gene promoters. Transcription activator involved in the regulation of cytokinesis, probably via the activation of several G2/M phase-specific genes transcription (e.g. KNOLLE). Transcription repressor that regulates organ growth. Binds to the promoters of G2/M-specific genes and to E2F target genes to prevent their expression in post-mitotic cells and to restrict the time window of their expression in proliferating cells. Required for the maintenance of diploidy. The sequence is that of Transcription factor MYB3R-1 from Arabidopsis thaliana (Mouse-ear cress).